We begin with the raw amino-acid sequence, 642 residues long: Probable serine/threonine-protein kinase drkA (642 aa).

The first 23 residues, 1 to 23 (MKKLPFLIIIIYIFLILISISSS), serve as a signal peptide directing secretion. Topologically, residues 24–322 (IDYNYNNDID…KPTISLLKKY (299 aa)) are extracellular. Residues 106-128 (SENSGSGSNSNSNSKNTDSSTGP) are compositionally biased toward low complexity. The disordered stretch occupies residues 106–136 (SENSGSGSNSNSNSKNTDSSTGPTPSPISIN). 5 N-linked (GlcNAc...) asparagine glycosylation sites follow: N136, N140, N158, N244, and N271. The helical transmembrane segment at 323-343 (LIIGFSIVGGLLIIGGCFLLI) threads the bilayer. Topologically, residues 344–642 (RNRYRSSGYY…SDLQYVRQQL (299 aa)) are cytoplasmic. The Protein kinase domain occupies 374-627 (IKIGVRIGKG…EQCLERLESI (254 aa)). ATP is bound by residues 380–388 (IGKGNYGEV) and K401. The Proton acceptor role is filled by D497.

It belongs to the protein kinase superfamily. TKL Ser/Thr protein kinase family.

Its subcellular location is the membrane. It catalyses the reaction L-seryl-[protein] + ATP = O-phospho-L-seryl-[protein] + ADP + H(+). It carries out the reaction L-threonyl-[protein] + ATP = O-phospho-L-threonyl-[protein] + ADP + H(+). The polypeptide is Probable serine/threonine-protein kinase drkA (drkA) (Dictyostelium discoideum (Social amoeba)).